The chain runs to 393 residues: Probable acetyl-CoA acetyltransferase (393 aa).

Cys-88 serves as the catalytic Acyl-thioester intermediate. Residues His-348 and Cys-378 each act as proton acceptor in the active site.

Belongs to the thiolase-like superfamily. Thiolase family.

It is found in the cytoplasm. It catalyses the reaction 2 acetyl-CoA = acetoacetyl-CoA + CoA. This is Probable acetyl-CoA acetyltransferase (yqeF) from Escherichia coli (strain K12).